We begin with the raw amino-acid sequence, 294 residues long: tRNA pseudouridine synthase B (294 aa).

D39 serves as the catalytic Nucleophile.

The protein belongs to the pseudouridine synthase TruB family. Type 1 subfamily.

The catalysed reaction is uridine(55) in tRNA = pseudouridine(55) in tRNA. In terms of biological role, responsible for synthesis of pseudouridine from uracil-55 in the psi GC loop of transfer RNAs. The chain is tRNA pseudouridine synthase B from Streptococcus pyogenes serotype M28 (strain MGAS6180).